The primary structure comprises 504 residues: D-alanine--D-alanyl carrier protein ligase (504 aa).

An ATP-binding site is contributed by 152 to 153 (TS). Residue Asp197 participates in D-alanine binding. 292-297 (NTYGPT) lines the ATP pocket. D-alanine is bound at residue Val301. ATP is bound by residues Asp383, 394–397 (YNGR), and Lys492. A D-alanine-binding site is contributed by Lys492.

The protein belongs to the ATP-dependent AMP-binding enzyme family. DltA subfamily.

Its subcellular location is the cytoplasm. The enzyme catalyses holo-[D-alanyl-carrier protein] + D-alanine + ATP = D-alanyl-[D-alanyl-carrier protein] + AMP + diphosphate. Its pathway is cell wall biogenesis; lipoteichoic acid biosynthesis. Its function is as follows. Catalyzes the first step in the D-alanylation of lipoteichoic acid (LTA), the activation of D-alanine and its transfer onto the D-alanyl carrier protein (Dcp) DltC. In an ATP-dependent two-step reaction, forms a high energy D-alanyl-AMP intermediate, followed by transfer of the D-alanyl residue as a thiol ester to the phosphopantheinyl prosthetic group of the Dcp. D-alanylation of LTA plays an important role in modulating the properties of the cell wall in Gram-positive bacteria, influencing the net charge of the cell wall. The polypeptide is D-alanine--D-alanyl carrier protein ligase (Bacillus cereus (strain Q1)).